We begin with the raw amino-acid sequence, 239 residues long: Small ribosomal subunit protein uS2c (239 aa).

It belongs to the universal ribosomal protein uS2 family.

It localises to the plastid. It is found in the organellar chromatophore. The polypeptide is Small ribosomal subunit protein uS2c (rps2) (Paulinella chromatophora).